We begin with the raw amino-acid sequence, 151 residues long: D-aminoacyl-tRNA deacylase (151 aa).

Residues 137-138 (GP) carry the Gly-cisPro motif, important for rejection of L-amino acids motif.

The protein belongs to the DTD family. As to quaternary structure, homodimer.

It is found in the cytoplasm. It carries out the reaction glycyl-tRNA(Ala) + H2O = tRNA(Ala) + glycine + H(+). The enzyme catalyses a D-aminoacyl-tRNA + H2O = a tRNA + a D-alpha-amino acid + H(+). Its function is as follows. An aminoacyl-tRNA editing enzyme that deacylates mischarged D-aminoacyl-tRNAs. Also deacylates mischarged glycyl-tRNA(Ala), protecting cells against glycine mischarging by AlaRS. Acts via tRNA-based rather than protein-based catalysis; rejects L-amino acids rather than detecting D-amino acids in the active site. By recycling D-aminoacyl-tRNA to D-amino acids and free tRNA molecules, this enzyme counteracts the toxicity associated with the formation of D-aminoacyl-tRNA entities in vivo and helps enforce protein L-homochirality. The polypeptide is D-aminoacyl-tRNA deacylase (Azoarcus sp. (strain BH72)).